We begin with the raw amino-acid sequence, 282 residues long: Undecaprenyl-diphosphatase (282 aa).

A run of 7 helical transmembrane segments spans residues Ala-45–Ile-65, Trp-86–Leu-106, Phe-114–Ile-134, Leu-151–Thr-171, Phe-196–Leu-216, Gly-224–Ile-244, and Phe-256–Phe-276.

This sequence belongs to the UppP family.

The protein resides in the cell membrane. The enzyme catalyses di-trans,octa-cis-undecaprenyl diphosphate + H2O = di-trans,octa-cis-undecaprenyl phosphate + phosphate + H(+). Catalyzes the dephosphorylation of undecaprenyl diphosphate (UPP). Confers resistance to bacitracin. This is Undecaprenyl-diphosphatase from Streptococcus gordonii (strain Challis / ATCC 35105 / BCRC 15272 / CH1 / DL1 / V288).